Reading from the N-terminus, the 269-residue chain is Holocytochrome-c synthase (269 aa).

Positions 1–72 are disordered; it reads MGWFWADQKT…ASKQPGQKMD (72 aa). HRM repeat units lie at residues 25–30 and 41–46; these read GCPVMH and ECPVMQ.

Belongs to the cytochrome c-type heme lyase family.

It localises to the mitochondrion inner membrane. It is found in the mitochondrion intermembrane space. It carries out the reaction holo-[cytochrome c] = apo-[cytochrome c] + heme b. In terms of biological role, lyase that catalyzes the covalent linking of the heme group to the cytochrome C apoprotein to produce the mature functional cytochrome. This chain is Holocytochrome-c synthase (CYC3), found in Saccharomyces cerevisiae (strain ATCC 204508 / S288c) (Baker's yeast).